The following is a 132-amino-acid chain: Iron-sulfur cluster assembly 1 homolog, mitochondrial (132 aa).

The transit peptide at 1 to 15 (MASSASSVVRATVRA) directs the protein to the mitochondrion. Residues Cys-60, Cys-124, and Cys-126 each coordinate Fe cation.

This sequence belongs to the HesB/IscA family. Homooligomer, forming a rod-shaped structure 24 nm in length that may arise through a double-helical assembly of subunits. Interacts with CRY4; CRY4 seems to be associated with the outside of the rod-shaped homooligomer. Does not interact with CRY1 or CRY2. As to expression, detected in retina, especially in the retinal ganglion layer, the inner nuclear layer and the outer nuclear layer. Detected in retina visual pigment cells (at protein level).

Its subcellular location is the mitochondrion. Its function is as follows. Involved in the maturation of mitochondrial 4Fe-4S proteins functioning late in the iron-sulfur cluster assembly pathway. Probably involved in the binding of an intermediate of Fe/S cluster assembly. Component of a putative magnetoreceptor complex formed by ISCA1 and CRY4, a member of the cryptochrome family that are known to be required for light-dependent magnetosensitivity in various orgnisms. The rod-like assembly may facilitate the perception of the Earth's weak magnetic field. Both ISCA1 and the complex with CRY4 have magnetic properties and are attracted to iron beads. When exposed to a magnetic field of 1 mT (superior to the natural magnetic field), over 50% of the rod-like complexes align more or less in parallel with the magnetic field at room temperature. This Columba livia (Rock dove) protein is Iron-sulfur cluster assembly 1 homolog, mitochondrial (ISCA1).